The primary structure comprises 135 residues: uncharacterized protein (135 aa).

The helical transmembrane segment at 35–55 (VVLVLIGATIILVVISVLVVS) threads the bilayer.

The protein localises to the membrane. This is an uncharacterized protein from Saccharomyces cerevisiae (strain ATCC 204508 / S288c) (Baker's yeast).